Reading from the N-terminus, the 264-residue chain is Tryptophan synthase alpha chain (264 aa).

Catalysis depends on proton acceptor residues glutamate 45 and aspartate 56.

It belongs to the TrpA family. Tetramer of two alpha and two beta chains.

The catalysed reaction is (1S,2R)-1-C-(indol-3-yl)glycerol 3-phosphate + L-serine = D-glyceraldehyde 3-phosphate + L-tryptophan + H2O. It participates in amino-acid biosynthesis; L-tryptophan biosynthesis; L-tryptophan from chorismate: step 5/5. In terms of biological role, the alpha subunit is responsible for the aldol cleavage of indoleglycerol phosphate to indole and glyceraldehyde 3-phosphate. In Leptospira borgpetersenii serovar Hardjo-bovis (strain JB197), this protein is Tryptophan synthase alpha chain.